The following is a 560-amino-acid chain: Ubiquitin carboxyl-terminal hydrolase MINDY-3 homolog (560 aa).

The segment covering 1–13 has biased composition (basic and acidic residues); the sequence is MNEKIVREQRGGE. Disordered stretches follow at residues 1 to 30 and 44 to 91; these read MNEK…AASA and SHKT…MLNA. Composition is skewed to low complexity over residues 15–30 and 52–81; these read SPSS…AASA and TASS…SSSS. The active-site Nucleophile is the C139. Positions 203-237 are disordered; it reads TEAGSTKKRSPAGEEESALAGQAAGSSEEVEEAAE. S212 and S219 each carry phosphoserine. The active-site Proton acceptor is H403.

Belongs to the MINDY deubiquitinase family. FAM188 subfamily.

It carries out the reaction Thiol-dependent hydrolysis of ester, thioester, amide, peptide and isopeptide bonds formed by the C-terminal Gly of ubiquitin (a 76-residue protein attached to proteins as an intracellular targeting signal).. Its function is as follows. Hydrolase that can remove 'Lys-48'-linked conjugated ubiquitin from proteins. The sequence is that of Ubiquitin carboxyl-terminal hydrolase MINDY-3 homolog (mindy3) from Drosophila melanogaster (Fruit fly).